The primary structure comprises 329 residues: Probable nicotianamine synthase 7 (329 aa).

Belongs to the nicotianamine synthase (NAS)-like family.

It catalyses the reaction 3 S-adenosyl-L-methionine = nicotianamine + 3 S-methyl-5'-thioadenosine + 3 H(+). Synthesizes nicotianamine, a polyamine that is the first intermediate in the synthesis of the phytosiderophores of the mugineic acid type found in gramineae which serves as a sensor for the physiological iron status within the plant, and/or might be involved in the transport of iron. The polypeptide is Probable nicotianamine synthase 7 (NAS7) (Hordeum vulgare (Barley)).